Consider the following 420-residue polypeptide: MKCFLFPLGDKKDEQRSPKPVSPTSNFSDVNKSGSDFSPRDVSGTSTVSSTGRNSNTSMSARENNLREFTIGDLKSATRNFSRSGMIGEGGFGCVFWGTIKNLEDPSKKIEVAVKQLGKRGLQGHKEWVTEVNFLGVVEHSNLVKLLGHCAEDDERGIQRLLVYEYMPNQSVEFHLSPRSPTVLTWDLRLRIAQDAARGLTYLHEEMDFQIIFRDFKSSNILLDENWTAKLSDFGLARLGPSPGSSHVSTDVVGTMGYAAPEYIQTGRLTSKSDVWGYGVFIYELITGRRPLDRNKPKGEQKLLEWVRPYLSDTRRFRLIVDPRLEGKYMIKSVQKLAVVANLCLTRNAKARPKMSEVLEMVTKIVEASSPGNGGKKPQLVPLKSQETSRVEEGKNKKVLDGAEGGWLEKLWNPKNVRAC.

The interval 1-64 (MKCFLFPLGD…SNTSMSAREN (64 aa)) is disordered. A compositionally biased stretch (polar residues) spans 22-36 (SPTSNFSDVNKSGSD). Positions 42–58 (VSGTSTVSSTGRNSNTS) are enriched in low complexity. Thr-70 is modified (phosphothreonine). Positions 81–366 (FSRSGMIGEG…EVLEMVTKIV (286 aa)) constitute a Protein kinase domain. ATP is bound by residues 87-95 (IGEGGFGCV) and Lys-115. A Phosphotyrosine modification is found at Tyr-164. Asp-215 serves as the catalytic Proton acceptor. 2 positions are modified to phosphoserine: Ser-219 and Ser-249. Phosphothreonine is present on residues Thr-250 and Thr-255. At Tyr-263 the chain carries Phosphotyrosine. Residues 369 to 396 (SSPGNGGKKPQLVPLKSQETSRVEEGKN) form a disordered region. The segment covering 387 to 396 (ETSRVEEGKN) has biased composition (basic and acidic residues).

Belongs to the protein kinase superfamily. Ser/Thr protein kinase family. As to quaternary structure, interacts with FLS2.

It localises to the cell membrane. It carries out the reaction L-seryl-[protein] + ATP = O-phospho-L-seryl-[protein] + ADP + H(+). It catalyses the reaction L-threonyl-[protein] + ATP = O-phospho-L-threonyl-[protein] + ADP + H(+). Functionally, functions redundantly with PCRK1 in basal resistance against bacterial pathogens and in regulation of plant immunity. Functions together with PCRK1 downstream of the pathogen-associated molecular pattern (PAMP) receptor FLS2. Contributes to the induction of SARD1 and CBP60G, which are transcriptional activator of ICS1, an enzyme involved in salicylate (SA) biosynthesis upon pathogen attack. The chain is Serine/threonine-protein kinase PCRK2 from Arabidopsis thaliana (Mouse-ear cress).